The following is a 508-amino-acid chain: Phenylalanine--tRNA ligase alpha subunit (508 aa).

Ala2 bears the N-acetylalanine mark. A Phosphothreonine modification is found at Thr190. A phosphoserine mark is found at Ser193 and Ser301. Lys311 carries the post-translational modification N6-acetyllysine. L-phenylalanine contacts are provided by residues Thr329, 372-374 (QIE), and Tyr412. Mg(2+) is bound at residue Glu414. Phe438 provides a ligand contact to L-phenylalanine.

This sequence belongs to the class-II aminoacyl-tRNA synthetase family. Phe-tRNA synthetase alpha subunit type 2 subfamily. As to quaternary structure, heterotetramer; dimer of two heterodimers formed by FARSA and FARSB. Requires Mg(2+) as cofactor.

It is found in the cytoplasm. It catalyses the reaction tRNA(Phe) + L-phenylalanine + ATP = L-phenylalanyl-tRNA(Phe) + AMP + diphosphate + H(+). The polypeptide is Phenylalanine--tRNA ligase alpha subunit (FARSA) (Pongo abelii (Sumatran orangutan)).